A 132-amino-acid chain; its full sequence is Glycine cleavage system H protein (132 aa).

The region spanning 24 to 106 is the Lipoyl-binding domain; it reads TVRVGITDFA…YGAGWLLDVQ (83 aa). An N6-lipoyllysine modification is found at Lys-65.

The protein belongs to the GcvH family. In terms of assembly, the glycine cleavage system is composed of four proteins: P, T, L and H. Requires (R)-lipoate as cofactor.

Its function is as follows. The glycine cleavage system catalyzes the degradation of glycine. The H protein shuttles the methylamine group of glycine from the P protein to the T protein. This is Glycine cleavage system H protein from Mycobacterium avium (strain 104).